Consider the following 371-residue polypeptide: Chaperone protein DnaJ (371 aa).

Positions 5 to 69 (DYYEVLGLSK…QKRAQYDQFG (65 aa)) constitute a J domain. The segment at 133–215 (GKELNVEIPV…CHGSGKVRKR (83 aa)) adopts a CR-type zinc-finger fold. Cys146, Cys149, Cys163, Cys166, Cys189, Cys192, Cys203, and Cys206 together coordinate Zn(2+). CXXCXGXG motif repeat units follow at residues 146 to 153 (CDTCKGSG), 163 to 170 (CKHCSGSG), 189 to 196 (CSHCSGTG), and 203 to 210 (CTTCHGSG).

It belongs to the DnaJ family. Homodimer. Zn(2+) is required as a cofactor.

It is found in the cytoplasm. Its function is as follows. Participates actively in the response to hyperosmotic and heat shock by preventing the aggregation of stress-denatured proteins and by disaggregating proteins, also in an autonomous, DnaK-independent fashion. Unfolded proteins bind initially to DnaJ; upon interaction with the DnaJ-bound protein, DnaK hydrolyzes its bound ATP, resulting in the formation of a stable complex. GrpE releases ADP from DnaK; ATP binding to DnaK triggers the release of the substrate protein, thus completing the reaction cycle. Several rounds of ATP-dependent interactions between DnaJ, DnaK and GrpE are required for fully efficient folding. Also involved, together with DnaK and GrpE, in the DNA replication of plasmids through activation of initiation proteins. The chain is Chaperone protein DnaJ from Bacillus cereus (strain AH820).